Here is a 228-residue protein sequence, read N- to C-terminus: MFDISKDFVSIFYRKETLKNCMFGIIGSRSETTLRQQNDKDWSFFVNDANRITGFNFFNIKKSFKKFFLSHRFNEGLNYPSLKIMKRISELLGYDLISLANKVPFVVCEVVSVIPIANTHLKRCKVNTGLTKSLDIVCGANNVRVGMKTVLVQVGGVLPSGTVIKKTKIAGFDSVGMLCSEKELNLKQKNEGIIEINPKIKVGKPFIDVYLNKQHSKWVNTKKRVKLS.

In terms of domain architecture, tRNA-binding spans 99 to 207; it reads LANKVPFVVC…PKIKVGKPFI (109 aa).

This is an uncharacterized protein from Mycoplasma genitalium (strain ATCC 33530 / DSM 19775 / NCTC 10195 / G37) (Mycoplasmoides genitalium).